The chain runs to 590 residues: Aspartate--tRNA(Asp/Asn) ligase (590 aa).

Glutamate 173 provides a ligand contact to L-aspartate. The tract at residues 197 to 200 (QIFK) is aspartate. An L-aspartate-binding site is contributed by arginine 219. ATP is bound by residues 219 to 221 (RDE) and glutamine 228. Residue histidine 450 participates in L-aspartate binding. Glutamate 484 is an ATP binding site. Arginine 491 contacts L-aspartate. 536–539 (GLDR) serves as a coordination point for ATP.

This sequence belongs to the class-II aminoacyl-tRNA synthetase family. Type 1 subfamily. As to quaternary structure, homodimer.

Its subcellular location is the cytoplasm. The catalysed reaction is tRNA(Asx) + L-aspartate + ATP = L-aspartyl-tRNA(Asx) + AMP + diphosphate. Aspartyl-tRNA synthetase with relaxed tRNA specificity since it is able to aspartylate not only its cognate tRNA(Asp) but also tRNA(Asn). Reaction proceeds in two steps: L-aspartate is first activated by ATP to form Asp-AMP and then transferred to the acceptor end of tRNA(Asp/Asn). In Coxiella burnetii (strain RSA 493 / Nine Mile phase I), this protein is Aspartate--tRNA(Asp/Asn) ligase.